Consider the following 357-residue polypeptide: MKKLLALFVIAPILISCTSNKNSEYREEYIKDTNGFDILMGQFAHNIENIWGLHEVLIAGPKDYVKYTDQYRTRSHINFEAGTITIETISPIDPTTYLRKAIITTLLMGDDPGSVDLYSDTNDIQISKEPFLYGQVMDNNGQPIRWEWRATHFADYLIANKLQKRQSGLHVIWSVTIQLVPNHLDKRAHKYLPLIRQASIKYGIDESLILAIMQIESSFNPYAVSRSDALGLMQVVQHTAGRDVFKMKGKSGQPSRSYLFDPENNIDAGTAYLSILQNSYLVDITNATSRRYAVITAYNGGAGSVLRVFSSDKKKAAQIINKMAPGDVYETLTTKHPSAESRRYLMKVNTAQKGYHH.

Residues methionine 1 to serine 16 form the signal peptide. Cysteine 17 carries N-palmitoyl cysteine lipidation. The S-diacylglycerol cysteine moiety is linked to residue cysteine 17.

This sequence belongs to the transglycosylase Slt family.

The protein resides in the cell outer membrane. The enzyme catalyses Exolytic cleavage of the (1-&gt;4)-beta-glycosidic linkage between N-acetylmuramic acid (MurNAc) and N-acetylglucosamine (GlcNAc) residues in peptidoglycan, from either the reducing or the non-reducing ends of the peptidoglycan chains, with concomitant formation of a 1,6-anhydrobond in the MurNAc residue.. In terms of biological role, murein-degrading enzyme. May play a role in recycling of muropeptides during cell elongation and/or cell division. This Photorhabdus laumondii subsp. laumondii (strain DSM 15139 / CIP 105565 / TT01) (Photorhabdus luminescens subsp. laumondii) protein is Membrane-bound lytic murein transglycosylase C.